A 216-amino-acid polypeptide reads, in one-letter code: Adenylate kinase (216 aa).

Residue 10-15 (GAGKGT) participates in ATP binding. The NMP stretch occupies residues 30 to 59 (STGDMFRAAIKEGTPLGLQAKEYMDRGDLV). Residues Thr31, Arg36, 57–59 (DLV), 85–88 (GFPR), and Gln92 each bind AMP. Residues 126 to 163 (GRRICKNCGATYHLVFNPPAKSGVCDKCGGELYQRADD) are LID. Arg127 lines the ATP pocket. Positions 130 and 133 each coordinate Zn(2+). 136 to 137 (TY) lines the ATP pocket. The Zn(2+) site is built by Cys150 and Cys153. Residues Arg160 and Arg171 each contribute to the AMP site. Gln199 lines the ATP pocket.

The protein belongs to the adenylate kinase family. In terms of assembly, monomer.

Its subcellular location is the cytoplasm. It carries out the reaction AMP + ATP = 2 ADP. It functions in the pathway purine metabolism; AMP biosynthesis via salvage pathway; AMP from ADP: step 1/1. Catalyzes the reversible transfer of the terminal phosphate group between ATP and AMP. Plays an important role in cellular energy homeostasis and in adenine nucleotide metabolism. This is Adenylate kinase from Geobacillus sp. (strain WCH70).